Reading from the N-terminus, the 413-residue chain is RNA-binding protein 41 (413 aa).

The segment covering 223–235 (SVGDSGTAESPSL) has biased composition (polar residues). A disordered region spans residues 223 to 247 (SVGDSGTAESPSLLQDKGKQAAQGK). Serine 232 carries the phosphoserine modification. An RRM domain is found at 309-387 (KVLYLKNLSP…KILVIEFGKN (79 aa)).

In terms of biological role, may bind RNA. The protein is RNA-binding protein 41 (RBM41) of Homo sapiens (Human).